The primary structure comprises 324 residues: Acetyl-coenzyme A carboxylase carboxyl transferase subunit beta (324 aa).

Positions 1 to 16 (MTKNNNDLSNSSSNPP) are enriched in low complexity. The disordered stretch occupies residues 1–51 (MTKNNNDLSNSSSNPPSNRPVAGKEAELEIQRETHAAQSGQSESWLSRPIP). Positions 22-35 (AGKEAELEIQRETH) are enriched in basic and acidic residues. The span at 36 to 45 (AAQSGQSESW) shows a compositional bias: polar residues. The CoA carboxyltransferase N-terminal domain occupies 68 to 324 (PSTECPQCHS…YRLLAKLTHV (257 aa)). Zn(2+) contacts are provided by cysteine 72, cysteine 75, cysteine 91, and cysteine 94. The C4-type zinc-finger motif lies at 72-94 (CPQCHSMITNTALIFNAYVCPHC).

The protein belongs to the AccD/PCCB family. As to quaternary structure, acetyl-CoA carboxylase is a heterohexamer composed of biotin carboxyl carrier protein (AccB), biotin carboxylase (AccC) and two subunits each of ACCase subunit alpha (AccA) and ACCase subunit beta (AccD). Zn(2+) is required as a cofactor.

It localises to the cytoplasm. It carries out the reaction N(6)-carboxybiotinyl-L-lysyl-[protein] + acetyl-CoA = N(6)-biotinyl-L-lysyl-[protein] + malonyl-CoA. The protein operates within lipid metabolism; malonyl-CoA biosynthesis; malonyl-CoA from acetyl-CoA: step 1/1. In terms of biological role, component of the acetyl coenzyme A carboxylase (ACC) complex. Biotin carboxylase (BC) catalyzes the carboxylation of biotin on its carrier protein (BCCP) and then the CO(2) group is transferred by the transcarboxylase to acetyl-CoA to form malonyl-CoA. The sequence is that of Acetyl-coenzyme A carboxylase carboxyl transferase subunit beta from Psychrobacter sp. (strain PRwf-1).